A 363-amino-acid chain; its full sequence is tRNA dimethylallyltransferase (363 aa).

The interval 1–55 (MLACNDDTSLYLLVKQVTKKEIYSNDLENGNVKRGASMQSLYLIGDPKCCRNNSS) is unknown insert. 65-72 (GPTASGKS) contributes to the ATP binding site. 67 to 72 (TASGKS) contacts substrate. Interaction with substrate tRNA regions lie at residues 90–93 (DSMQ) and 214–218 (QRLIR).

The protein belongs to the IPP transferase family. Monomer. The cofactor is Mg(2+).

It carries out the reaction adenosine(37) in tRNA + dimethylallyl diphosphate = N(6)-dimethylallyladenosine(37) in tRNA + diphosphate. Its function is as follows. Catalyzes the transfer of a dimethylallyl group onto the adenine at position 37 in tRNAs that read codons beginning with uridine, leading to the formation of N6-(dimethylallyl)adenosine (i(6)A). This Rickettsia conorii (strain ATCC VR-613 / Malish 7) protein is tRNA dimethylallyltransferase.